The sequence spans 284 residues: Tropomyosin alpha-3 chain (284 aa).

The residue at position 1 (M1) is an N-acetylmethionine. The disordered stretch occupies residues 1-40; that stretch reads MEAIKKKMQMLKLDKENALDRAEQAEAEQKQAEERSKQLE. Residues 1 to 284 adopt a coiled-coil conformation; the sequence is MEAIKKKMQM…DHALNDMTSI (284 aa). Residues 12-40 are compositionally biased toward basic and acidic residues; the sequence is KLDKENALDRAEQAEAEQKQAEERSKQLE. Phosphothreonine is present on T53. Phosphoserine occurs at positions 61 and 87. A phosphothreonine mark is found at T108 and T252. Position 261 is a phosphotyrosine (Y261). Phosphoserine is present on S271. T282 is subject to Phosphothreonine. Residue S283 is modified to Phosphoserine.

Belongs to the tropomyosin family. As to quaternary structure, homodimer. Heterodimer of an alpha (TPM1, TPM3 or TPM4) and a beta (TPM2) chain. Interacts with TMOD1. Interacts with TNNT1.

It is found in the cytoplasm. It localises to the cytoskeleton. In terms of biological role, binds to actin filaments in muscle and non-muscle cells. Plays a central role, in association with the troponin complex, in the calcium dependent regulation of vertebrate striated muscle contraction. Smooth muscle contraction is regulated by interaction with caldesmon. In non-muscle cells is implicated in stabilizing cytoskeleton actin filaments. This is Tropomyosin alpha-3 chain (TPM3) from Sus scrofa (Pig).